Reading from the N-terminus, the 180-residue chain is Shikimate kinase (180 aa).

14–19 serves as a coordination point for ATP; the sequence is GAGKST. Ser-18 is a binding site for Mg(2+). Asp-36, Arg-60, and Gly-82 together coordinate substrate. Arg-120 lines the ATP pocket. Arg-140 contacts substrate. Position 157 (Gln-157) interacts with ATP.

This sequence belongs to the shikimate kinase family. As to quaternary structure, monomer. Mg(2+) is required as a cofactor.

The protein resides in the cytoplasm. It carries out the reaction shikimate + ATP = 3-phosphoshikimate + ADP + H(+). It participates in metabolic intermediate biosynthesis; chorismate biosynthesis; chorismate from D-erythrose 4-phosphate and phosphoenolpyruvate: step 5/7. Functionally, catalyzes the specific phosphorylation of the 3-hydroxyl group of shikimic acid using ATP as a cosubstrate. In Haemophilus influenzae (strain PittGG), this protein is Shikimate kinase.